The primary structure comprises 512 residues: Glycine betaine transporter OpuD (512 aa).

Transmembrane regions (helical) follow at residues 5-25, 45-65, 82-102, 135-155, 186-206, 222-242, 257-277, 312-332, 343-363, 395-415, 441-461, and 464-484; these read ISSVFWIVIAITAAAVLWGVI, FGWYYLLVVSLFVGFCLFLIF, FGLLSWFAMLFSAGMGIGLVF, FFHWGLHAWAIYAIVALCIAY, IDCIAVFATVVGVSTSLGLGA, AFIVQLVLIIIVTVLFLLSAW, MVLAGLLMLFMLVVGPTVLIM, WTIFYWAWWISWSPFVGIFIA, FLIGVLVTPCILTFLWFSIFG, LTMVTSILALILIAVFFITSA, WGIIQSAMAAVLLYSGGLAAL, and TAILAALPFSIVILLMIASLY.

This sequence belongs to the BCCT transporter (TC 2.A.15) family.

The protein localises to the cell membrane. With respect to regulation, activity is stimulated by high osmolarity. Its function is as follows. High-affinity uptake of glycine betaine. Does not mediate either carnitine or choline uptake. In Bacillus subtilis (strain 168), this protein is Glycine betaine transporter OpuD (opuD).